The primary structure comprises 38 residues: Large ribosomal subunit protein bL36 (38 aa).

It belongs to the bacterial ribosomal protein bL36 family.

The protein is Large ribosomal subunit protein bL36 (rpmJ) of Streptococcus pneumoniae serotype 4 (strain ATCC BAA-334 / TIGR4).